The primary structure comprises 282 residues: 2-dehydro-3-deoxyphosphooctonate aldolase (282 aa).

It belongs to the KdsA family.

It localises to the cytoplasm. It catalyses the reaction D-arabinose 5-phosphate + phosphoenolpyruvate + H2O = 3-deoxy-alpha-D-manno-2-octulosonate-8-phosphate + phosphate. The protein operates within carbohydrate biosynthesis; 3-deoxy-D-manno-octulosonate biosynthesis; 3-deoxy-D-manno-octulosonate from D-ribulose 5-phosphate: step 2/3. It functions in the pathway bacterial outer membrane biogenesis; lipopolysaccharide biosynthesis. The protein is 2-dehydro-3-deoxyphosphooctonate aldolase of Bartonella bacilliformis (strain ATCC 35685 / KC583 / Herrer 020/F12,63).